The sequence spans 287 residues: Orotidine 5'-phosphate decarboxylase (287 aa).

Lysine 97 acts as the Proton donor in catalysis.

Belongs to the OMP decarboxylase family. Type 2 subfamily.

The catalysed reaction is orotidine 5'-phosphate + H(+) = UMP + CO2. It functions in the pathway pyrimidine metabolism; UMP biosynthesis via de novo pathway; UMP from orotate: step 2/2. The protein is Orotidine 5'-phosphate decarboxylase (pyrF) of Clostridium perfringens (strain 13 / Type A).